The chain runs to 373 residues: Probable leucine aminopeptidase 1 (373 aa).

The N-terminal stretch at 1–18 (MKLLSVLALSATATSVLG) is a signal peptide. Zn(2+)-binding residues include His-176 and Asp-195. N-linked (GlcNAc...) asparagine glycosylation occurs at Asn-196. The Zn(2+) site is built by Glu-234 and Asp-261. Asn-288 is a glycosylation site (N-linked (GlcNAc...) asparagine). A disulfide bridge connects residues Cys-310 and Cys-314. A Zn(2+)-binding site is contributed by His-343.

It belongs to the peptidase M28 family. M28E subfamily. As to quaternary structure, monomer. Zn(2+) is required as a cofactor.

It is found in the secreted. Functionally, extracellular aminopeptidase which contributes to pathogenicity. This chain is Probable leucine aminopeptidase 1 (LAP1), found in Trichophyton verrucosum (strain HKI 0517).